The chain runs to 264 residues: Small ribosomal subunit protein uS2 (264 aa).

It belongs to the universal ribosomal protein uS2 family.

The sequence is that of Small ribosomal subunit protein uS2 from Synechococcus sp. (strain JA-2-3B'a(2-13)) (Cyanobacteria bacterium Yellowstone B-Prime).